The chain runs to 177 residues: MVDSTLIKDSNDTDTDTGVAEPAIKPHLILALDYGVKKMGMALGNSLTETARAFDILAMNNGQPDWDNLLGIIKVWGVAKVVVGLPLNMDGSSSMLSKRAHKFARRLAHRIMEQHLPVIVSLCDERLTSVAAREIAWENGWIQNERDPIDDISACILMSTYFADPNSSIAIDAIKAD.

Belongs to the YqgF nuclease family.

It localises to the cytoplasm. Could be a nuclease involved in processing of the 5'-end of pre-16S rRNA. In Psychrobacter arcticus (strain DSM 17307 / VKM B-2377 / 273-4), this protein is Putative pre-16S rRNA nuclease.